The following is a 128-amino-acid chain: UPF0102 protein Mext_0406 (128 aa).

The protein belongs to the UPF0102 family.

This chain is UPF0102 protein Mext_0406, found in Methylorubrum extorquens (strain PA1) (Methylobacterium extorquens).